A 120-amino-acid polypeptide reads, in one-letter code: Ribosome-binding factor A (120 aa).

It belongs to the RbfA family. Monomer. Binds 30S ribosomal subunits, but not 50S ribosomal subunits or 70S ribosomes.

It localises to the cytoplasm. One of several proteins that assist in the late maturation steps of the functional core of the 30S ribosomal subunit. Associates with free 30S ribosomal subunits (but not with 30S subunits that are part of 70S ribosomes or polysomes). Required for efficient processing of 16S rRNA. May interact with the 5'-terminal helix region of 16S rRNA. The polypeptide is Ribosome-binding factor A (Borreliella burgdorferi (strain ATCC 35210 / DSM 4680 / CIP 102532 / B31) (Borrelia burgdorferi)).